The sequence spans 248 residues: Ribosomal RNA small subunit methyltransferase G (248 aa).

S-adenosyl-L-methionine-binding positions include Gly93, Leu98, 143-144 (AE), and Arg161.

Belongs to the methyltransferase superfamily. RNA methyltransferase RsmG family.

It localises to the cytoplasm. Specifically methylates the N7 position of guanine in position 518 of 16S rRNA. The protein is Ribosomal RNA small subunit methyltransferase G of Mycobacterium leprae (strain Br4923).